Here is a 471-residue protein sequence, read N- to C-terminus: T-box transcription factor T (471 aa).

Positions 24-196 (LWTKFCSLTN…HNPFAKAFLD (173 aa)) form a DNA-binding region, T-box.

Developing notochord.

Its subcellular location is the nucleus. Involved in the transcriptional regulation of genes required for mesoderm differentiation. In Halocynthia roretzi (Sea squirt), this protein is T-box transcription factor T.